A 788-amino-acid chain; its full sequence is Diacylglycerol kinase gamma (788 aa).

A compositionally biased stretch (basic and acidic residues) spans proline 83 to glutamate 93. Residues proline 83 to serine 150 form a disordered region. Polar residues predominate over residues alanine 95–serine 109. 2 EF-hand domains span residues arginine 172–valine 207 and glutamate 217–leucine 252. The Ca(2+) site is built by aspartate 185, aspartate 187, asparagine 189, glutamate 196, aspartate 230, asparagine 232, aspartate 234, and glutamate 241. Phorbol-ester/DAG-type zinc fingers lie at residues arginine 268–cysteine 318 and glutamine 333–cysteine 380. The DAGKc domain maps to proline 427 to proline 561. The disordered stretch occupies residues methionine 768–aspartate 788.

Belongs to the eukaryotic diacylglycerol kinase family. In terms of tissue distribution, expressed specifically in brain. Highly expressed in cerebellar Purkinje cells (at protein level).

It localises to the membrane. The protein resides in the cytoplasm. The protein localises to the cytosol. It is found in the cytoskeleton. The catalysed reaction is a 1,2-diacyl-sn-glycerol + ATP = a 1,2-diacyl-sn-glycero-3-phosphate + ADP + H(+). It carries out the reaction 1,2-didecanoyl-sn-glycerol + ATP = 1,2-didecanoyl-sn-glycero-3-phosphate + ADP + H(+). It catalyses the reaction 1,2-di-(9Z-octadecenoyl)-sn-glycerol + ATP = 1,2-di-(9Z-octadecenoyl)-sn-glycero-3-phosphate + ADP + H(+). The enzyme catalyses 1-octadecanoyl-2-(9Z,12Z)-octadecadienoyl-sn-glycerol + ATP = 1-octadecanoyl-2-(9Z,12Z-octadecadienoyl)-sn-glycero-3-phosphate + ADP + H(+). The catalysed reaction is 1-octadecanoyl-2-(5Z,8Z,11Z,14Z-eicosatetraenoyl)-sn-glycerol + ATP = 1-octadecanoyl-2-(5Z,8Z,11Z,14Z-eicosatetraenoyl)-sn-glycero-3-phosphate + ADP + H(+). It participates in lipid metabolism; glycerolipid metabolism. With respect to regulation, the activity is calcium-dependent. Requires phosphatidylserine for maximal activity. Diacylglycerol kinase that converts diacylglycerol/DAG into phosphatidic acid/phosphatidate/PA and regulates the respective levels of these two bioactive lipids. Thereby, acts as a central switch between the signaling pathways activated by these second messengers with different cellular targets and opposite effects in numerous biological processes. Has no apparent specificity with regard to the acyl compositions of diacylglycerol. Specifically expressed in the cerebellum where it controls the level of diacylglycerol which in turn regulates the activity of protein kinase C gamma. Through protein kinase C gamma, indirectly regulates the dendritic development of Purkinje cells, cerebellar long term depression and ultimately cerebellar motor coordination. The polypeptide is Diacylglycerol kinase gamma (Dgkg) (Rattus norvegicus (Rat)).